The following is a 182-amino-acid chain: 3-hydroxyanthranilate 3,4-dioxygenase (182 aa).

R46 is an O2 binding site. Positions 50, 56, and 96 each coordinate Fe cation. Substrate is bound at residue E56. Substrate is bound by residues R100 and E111. Residues C126, C129, C163, and C166 each coordinate Fe cation.

This sequence belongs to the 3-HAO family. In terms of assembly, homodimer. Fe(2+) serves as cofactor.

It catalyses the reaction 3-hydroxyanthranilate + O2 = (2Z,4Z)-2-amino-3-carboxymuconate 6-semialdehyde. It participates in cofactor biosynthesis; NAD(+) biosynthesis; quinolinate from L-kynurenine: step 3/3. Its function is as follows. Catalyzes the oxidative ring opening of 3-hydroxyanthranilate to 2-amino-3-carboxymuconate semialdehyde, which spontaneously cyclizes to quinolinate. This chain is 3-hydroxyanthranilate 3,4-dioxygenase, found in Brucella anthropi (strain ATCC 49188 / DSM 6882 / CCUG 24695 / JCM 21032 / LMG 3331 / NBRC 15819 / NCTC 12168 / Alc 37) (Ochrobactrum anthropi).